Reading from the N-terminus, the 648-residue chain is Wilms tumor protein 1-interacting protein homolog (648 aa).

Disordered regions lie at residues 27–56, 142–291, and 306–327; these read DGMY…KVYS, SNSL…SPRS, and SPRS…GSMS. 2 stretches are compositionally biased toward low complexity: residues 158-171 and 178-192; these read SPRS…SSQD and PRSS…LVSP. Composition is skewed to polar residues over residues 197-213 and 220-241; these read GTSV…TASD and PRTS…TSGI. Over residues 252-267 the composition is skewed to low complexity; that stretch reads PRSSTTSPRSSYSDSR. 3 consecutive LIM zinc-binding domains span residues 437–498, 502–561, and 562–631; these read GICV…SGFQ, EKCF…TVFA, and PKCA…RLKT.

It belongs to the zyxin/ajuba family.

The protein resides in the cell junction. Its subcellular location is the adherens junction. It localises to the nucleus. In terms of biological role, may monitor slit diaphragm protein assembly, a specialized adherens junction characteristic of podocytes. In case of podocyte injury, it shuttles into the nucleus and acts as a transcription regulator. Plays a role in the regulation of cell morphology and cytoskeletal organization. Acts as a transcriptional corepressor for snai1 and snai2/slug and plays a role in regulating neural crest development. This Danio rerio (Zebrafish) protein is Wilms tumor protein 1-interacting protein homolog (wtip).